We begin with the raw amino-acid sequence, 464 residues long: GDNF family receptor alpha-2 (464 aa).

The N-terminal stretch at 1 to 21 (MILANVFCLFFFLDETLRSLA) is a signal peptide. Disulfide bonds link cysteine 40-cysteine 93, cysteine 95-cysteine 105, cysteine 161-cysteine 222, cysteine 168-cysteine 174, cysteine 185-cysteine 200, cysteine 195-cysteine 241, cysteine 224-cysteine 229, cysteine 251-cysteine 323, cysteine 258-cysteine 264, cysteine 275-cysteine 293, and cysteine 285-cysteine 347. N-linked (GlcNAc...) asparagine glycosylation occurs at asparagine 52. N-linked (GlcNAc...) asparagine glycosylation occurs at asparagine 357. Residues 363–392 (VSPKGPSFQATQAPRVEKTPSLPDDLSDST) are disordered. Positions 381–392 (TPSLPDDLSDST) are enriched in low complexity. Asparagine 413 is a glycosylation site (N-linked (GlcNAc...) asparagine). The GPI-anchor amidated serine moiety is linked to residue serine 444. The propeptide at 445–464 (RARPSAALTVLSVLMLKLAL) is removed in mature form.

This sequence belongs to the GDNFR family. In terms of assembly, interacts with NRTN ligand and RET: forms a 2:2:2 ternary complex composed of NRTN ligand, GFRA2 and RET receptor. Also forms a 4:4:4 tetrameric complex composed of 4 copies of NRTN ligand, GFRA2 and RET receptor, which prevents endocytosis of RET. Interacts with SORL1. Found in both brain and placenta.

It is found in the cell membrane. Its function is as follows. Receptor for neurturin (NRTN), a growth factor that supports the survival of sympathetic neurons. NRTN-binding leads to autophosphorylation and activation of the RET receptor. Also able to mediate GDNF signaling through the RET tyrosine kinase receptor. Functionally, participates in NRTN-induced 'Ser-727' phosphorylation of STAT3. This Homo sapiens (Human) protein is GDNF family receptor alpha-2 (GFRA2).